The sequence spans 407 residues: MTSPIHVTSEIGKLKTVMLHRPGREIENITPDYMERLLFDDIPYLPIAQEEHDFFAQTLRDQGIEVLYFEKLAAEALASDDVRKEFLNRMIAESGYVAGTTHDALYDYLYQMTPQEMVDKIIEGVRGTDIDIAQPDLQSVSENTDWPFLMDPMPNAYFTRDPQASIGDGISINKMTFPARQRESLITEYIINHHPRFAGQVEVWRDRNHESHIEGGDELVLSDHVLAIGVSQRTTADAIEDIARNLFKDSNYDTVIAISIPHNHAMMHLDTVFTMINHDQFTVHPAILDDKGEVDNWVLHPGKDGEITIEHHTDIKAVLKQALNKPEIDLIPTGNGDPIVAPREQWNDGSNTLAIAPGEVVTYNRNYVSNALLKEHGILVHEVRSSELSRGRGGPRCMSCPIVREDL.

The Amidino-cysteine intermediate role is filled by Cys397.

The protein belongs to the arginine deiminase family.

It is found in the cytoplasm. It catalyses the reaction L-arginine + H2O = L-citrulline + NH4(+). It participates in amino-acid degradation; L-arginine degradation via ADI pathway; carbamoyl phosphate from L-arginine: step 1/2. This is Arginine deiminase from Limosilactobacillus fermentum (strain NBRC 3956 / LMG 18251) (Lactobacillus fermentum).